A 507-amino-acid polypeptide reads, in one-letter code: Histidine ammonia-lyase (507 aa).

Positions 140–142 form a cross-link, 5-imidazolinone (Ala-Gly); sequence ASG. Position 141 is a 2,3-didehydroalanine (Ser) (serine 141).

The protein belongs to the PAL/histidase family. Post-translationally, contains an active site 4-methylidene-imidazol-5-one (MIO), which is formed autocatalytically by cyclization and dehydration of residues Ala-Ser-Gly.

It is found in the cytoplasm. The catalysed reaction is L-histidine = trans-urocanate + NH4(+). Its pathway is amino-acid degradation; L-histidine degradation into L-glutamate; N-formimidoyl-L-glutamate from L-histidine: step 1/3. In Yersinia enterocolitica serotype O:8 / biotype 1B (strain NCTC 13174 / 8081), this protein is Histidine ammonia-lyase.